Reading from the N-terminus, the 120-residue chain is MERIMFRAKIHRATVTQADLDYVGSVTIDQDLLDAADILVNERVDIYNITNGNRLSTYALSGPRGSGVIGINGAAAHLVQPGDLVIIAAYGNFSEEEARTLEPRVVLVDAQNRILDLQPA.

The Schiff-base intermediate with substrate; via pyruvic acid role is filled by S25. S25 carries the post-translational modification Pyruvic acid (Ser). T57 contributes to the substrate binding site. Residue Y58 is the Proton donor of the active site. Position 73 to 75 (73 to 75 (GAA)) interacts with substrate.

It belongs to the PanD family. Heterooctamer of four alpha and four beta subunits. The cofactor is pyruvate. Post-translationally, is synthesized initially as an inactive proenzyme, which is activated by self-cleavage at a specific serine bond to produce a beta-subunit with a hydroxyl group at its C-terminus and an alpha-subunit with a pyruvoyl group at its N-terminus.

It localises to the cytoplasm. It carries out the reaction L-aspartate + H(+) = beta-alanine + CO2. Its pathway is cofactor biosynthesis; (R)-pantothenate biosynthesis; beta-alanine from L-aspartate: step 1/1. Functionally, catalyzes the pyruvoyl-dependent decarboxylation of aspartate to produce beta-alanine. The sequence is that of Aspartate 1-decarboxylase from Deinococcus geothermalis (strain DSM 11300 / CIP 105573 / AG-3a).